The primary structure comprises 496 residues: Glycerol kinase (496 aa).

Threonine 12 contributes to the ADP binding site. Residues threonine 12, threonine 13, and serine 14 each coordinate ATP. Residue threonine 12 coordinates sn-glycerol 3-phosphate. Position 16 (arginine 16) interacts with ADP. The sn-glycerol 3-phosphate site is built by arginine 82, glutamate 83, and tyrosine 134. The glycerol site is built by arginine 82, glutamate 83, and tyrosine 134. Histidine 230 carries the post-translational modification Phosphohistidine; by HPr. Aspartate 244 serves as a coordination point for sn-glycerol 3-phosphate. Aspartate 244 and glutamine 245 together coordinate glycerol. Residues threonine 266 and glycine 309 each contribute to the ADP site. Residues threonine 266, glycine 309, glutamine 313, and glycine 410 each contribute to the ATP site. Residues glycine 410 and asparagine 414 each contribute to the ADP site.

Belongs to the FGGY kinase family. Homotetramer and homodimer (in equilibrium). In terms of processing, the phosphoenolpyruvate-dependent sugar phosphotransferase system (PTS), including enzyme I, and histidine-containing protein (HPr) are required for the phosphorylation, which leads to the activation of the enzyme.

The enzyme catalyses glycerol + ATP = sn-glycerol 3-phosphate + ADP + H(+). The protein operates within polyol metabolism; glycerol degradation via glycerol kinase pathway; sn-glycerol 3-phosphate from glycerol: step 1/1. Activated by phosphorylation and inhibited by fructose 1,6-bisphosphate (FBP). Its function is as follows. Key enzyme in the regulation of glycerol uptake and metabolism. Catalyzes the phosphorylation of glycerol to yield sn-glycerol 3-phosphate. The polypeptide is Glycerol kinase (Bacillus cereus (strain ATCC 14579 / DSM 31 / CCUG 7414 / JCM 2152 / NBRC 15305 / NCIMB 9373 / NCTC 2599 / NRRL B-3711)).